Here is a 192-residue protein sequence, read N- to C-terminus: Cell division protein SepF (192 aa).

Residues 154-192 (QEEPAPSNVTTTTQQSEETISESVTAPEPAWGTPVASAI) form a disordered region. Positions 162 to 178 (VTTTTQQSEETISESVT) are enriched in low complexity.

The protein belongs to the SepF family. As to quaternary structure, homodimer. Interacts with FtsZ.

It localises to the cytoplasm. In terms of biological role, cell division protein that is part of the divisome complex and is recruited early to the Z-ring. Probably stimulates Z-ring formation, perhaps through the cross-linking of FtsZ protofilaments. Its function overlaps with FtsA. The protein is Cell division protein SepF of Prochlorococcus marinus (strain MIT 9211).